We begin with the raw amino-acid sequence, 219 residues long: Deoxyribose-phosphate aldolase (219 aa).

Catalysis depends on aspartate 92, which acts as the Proton donor/acceptor. Catalysis depends on lysine 154, which acts as the Schiff-base intermediate with acetaldehyde. Lysine 183 serves as the catalytic Proton donor/acceptor.

The protein belongs to the DeoC/FbaB aldolase family. DeoC type 1 subfamily.

The protein localises to the cytoplasm. It carries out the reaction 2-deoxy-D-ribose 5-phosphate = D-glyceraldehyde 3-phosphate + acetaldehyde. The protein operates within carbohydrate degradation; 2-deoxy-D-ribose 1-phosphate degradation; D-glyceraldehyde 3-phosphate and acetaldehyde from 2-deoxy-alpha-D-ribose 1-phosphate: step 2/2. Catalyzes a reversible aldol reaction between acetaldehyde and D-glyceraldehyde 3-phosphate to generate 2-deoxy-D-ribose 5-phosphate. This chain is Deoxyribose-phosphate aldolase, found in Dictyoglomus turgidum (strain DSM 6724 / Z-1310).